The following is an 884-amino-acid chain: Valine--tRNA ligase (884 aa).

Positions 43–53 (PNVTGSLHIGH) match the 'HIGH' region motif. Residues 530–534 (KMSKS) carry the 'KMSKS' region motif. Lys-533 contacts ATP. Positions 817-884 (VIDLDAERGR…KLKAALERLM (68 aa)) form a coiled coil.

The protein belongs to the class-I aminoacyl-tRNA synthetase family. ValS type 1 subfamily. In terms of assembly, monomer.

The protein localises to the cytoplasm. The catalysed reaction is tRNA(Val) + L-valine + ATP = L-valyl-tRNA(Val) + AMP + diphosphate. Its function is as follows. Catalyzes the attachment of valine to tRNA(Val). As ValRS can inadvertently accommodate and process structurally similar amino acids such as threonine, to avoid such errors, it has a 'posttransfer' editing activity that hydrolyzes mischarged Thr-tRNA(Val) in a tRNA-dependent manner. The protein is Valine--tRNA ligase of Zymomonas mobilis subsp. mobilis (strain ATCC 31821 / ZM4 / CP4).